Reading from the N-terminus, the 520-residue chain is GMP synthase [glutamine-hydrolyzing] (520 aa).

The Glutamine amidotransferase type-1 domain maps to 13–205 (KIIVLDYGSQ…ALNICKAKGD (193 aa)). Cysteine 90 acts as the Nucleophile in catalysis. Residues histidine 179 and glutamate 181 contribute to the active site. The region spanning 206 to 395 (WSMDNFIDMQ…LGMPDHIVWR (190 aa)) is the GMPS ATP-PPase domain. Residue 233-239 (SGGVDSS) coordinates ATP.

In terms of assembly, homodimer.

The enzyme catalyses XMP + L-glutamine + ATP + H2O = GMP + L-glutamate + AMP + diphosphate + 2 H(+). Its pathway is purine metabolism; GMP biosynthesis; GMP from XMP (L-Gln route): step 1/1. Its function is as follows. Catalyzes the synthesis of GMP from XMP. This is GMP synthase [glutamine-hydrolyzing] from Streptococcus pneumoniae (strain ATCC 700669 / Spain 23F-1).